The following is a 245-amino-acid chain: uncharacterized protein (245 aa).

Helical transmembrane passes span 29–51 (LVVL…RIGM) and 61–83 (TILF…LMLH).

It localises to the cell membrane. This is an uncharacterized protein from Treponema pallidum (strain Nichols).